Consider the following 546-residue polypeptide: Membrane protein insertase YidC (546 aa).

The helical transmembrane segment at 6-26 (NLLLIALLFVSFMIWQAWQVD) threads the bilayer. Residues 30-44 (QPTAQTTQQTTNTAT) show a composition bias toward low complexity. The disordered stretch occupies residues 30-55 (QPTAQTTQQTTNTATGDKASQAVPGS). The next 4 helical transmembrane spans lie at 344-364 (KFIHSFVGNWGFSIIVITFIV), 419-439 (LGGCLPLIIQMPIFLALYYML), 457-477 (LSAQDPYYILPILMGITMYFI), and 498-518 (PVIFTVFFLWFPAGLVLYYIV).

The protein belongs to the OXA1/ALB3/YidC family. Type 1 subfamily. In terms of assembly, interacts with the Sec translocase complex via SecD. Specifically interacts with transmembrane segments of nascent integral membrane proteins during membrane integration.

Its subcellular location is the cell inner membrane. Its function is as follows. Required for the insertion and/or proper folding and/or complex formation of integral membrane proteins into the membrane. Involved in integration of membrane proteins that insert both dependently and independently of the Sec translocase complex, as well as at least some lipoproteins. Aids folding of multispanning membrane proteins. The polypeptide is Membrane protein insertase YidC (Yersinia pestis).